Here is a 592-residue protein sequence, read N- to C-terminus: Protein phosphatase EYA1 (592 aa).

Disordered regions lie at residues 1–95 (MEMQ…RPYP) and 240–320 (MTSS…PDSD). Positions 8-26 (SPHSRLSGSSESPSGPKLG) are enriched in low complexity. Residues 28–63 (SHINSNSMTPNGTEVKTEPMSSSETASTTADGSLNN) show a composition bias toward polar residues. 2 stretches are compositionally biased toward low complexity: residues 64-75 (FSGSAIGSSSFS) and 241-253 (TSSN…PSTN). Over residues 254-287 (ATYQLQEPPSGITSQAVTDPTAEYSTIHSPSTPI) the composition is skewed to polar residues. Positions 288 to 303 (KDSDSDRLRRGSDGKS) are enriched in basic and acidic residues. Asp328 (nucleophile) is an active-site residue. Asp328, Asp330, and Asp556 together coordinate Mg(2+). Asp330 acts as the Proton donor in catalysis.

It belongs to the HAD-like hydrolase superfamily. EYA family. In terms of assembly, probably interacts with SIX2, SIX4 and SIX5. Interacts with H2AX in response to DNA damage. Interacts with SIX3; promotes EYA1 translocation to the nucleus. Mg(2+) is required as a cofactor. Sumoylated with SUMO1. As to expression, in the embryo, highly expressed in kidney with lower levels in brain. Weakly expressed in lung. In the adult, highly expressed in heart and skeletal muscle. Weakly expressed in brain and liver. No expression in eye or kidney.

The protein resides in the cytoplasm. It localises to the nucleus. The enzyme catalyses O-phospho-L-tyrosyl-[protein] + H2O = L-tyrosyl-[protein] + phosphate. The catalysed reaction is O-phospho-L-seryl-[protein] + H2O = L-seryl-[protein] + phosphate. It catalyses the reaction O-phospho-L-threonyl-[protein] + H2O = L-threonyl-[protein] + phosphate. Functions both as protein phosphatase and as transcriptional coactivator for SIX1, and probably also for SIX2, SIX4 and SIX5. Tyrosine phosphatase that dephosphorylates 'Tyr-142' of histone H2AX (H2AXY142ph) and promotes efficient DNA repair via the recruitment of DNA repair complexes containing MDC1. 'Tyr-142' phosphorylation of histone H2AX plays a central role in DNA repair and acts as a mark that distinguishes between apoptotic and repair responses to genotoxic stress. Its function as histone phosphatase may contribute to its function in transcription regulation during organogenesis. Also has phosphatase activity with proteins phosphorylated on Ser and Thr residues (in vitro). Required for normal embryonic development of the craniofacial and trunk skeleton, kidneys and ears. Together with SIX1, it plays an important role in hypaxial muscle development; in this it is functionally redundant with EYA2. The protein is Protein phosphatase EYA1 (EYA1) of Homo sapiens (Human).